The primary structure comprises 305 residues: Putative S-adenosyl-L-methionine-dependent methyltransferase Mvan_1344 (305 aa).

S-adenosyl-L-methionine-binding positions include Asp-130 and 159–160; that span reads DL.

The protein belongs to the UPF0677 family.

Its function is as follows. Exhibits S-adenosyl-L-methionine-dependent methyltransferase activity. This chain is Putative S-adenosyl-L-methionine-dependent methyltransferase Mvan_1344, found in Mycolicibacterium vanbaalenii (strain DSM 7251 / JCM 13017 / BCRC 16820 / KCTC 9966 / NRRL B-24157 / PYR-1) (Mycobacterium vanbaalenii).